A 124-amino-acid chain; its full sequence is MIPGEVIPANGEVVLNKGRRMVKVLVAHTGDRPIQVGSHFHFAEVNRSLHFDRQEAFGMRLNIAAGTAVRFEPGEEKEVDLVEIGGKRQIYGLNGWTDGAIDDENLPSFLASYQVSEDKEDEEK.

This sequence belongs to the urease beta subunit family. In terms of assembly, heterotrimer of UreA (gamma), UreB (beta) and UreC (alpha) subunits. Three heterotrimers associate to form the active enzyme.

Its subcellular location is the cytoplasm. It catalyses the reaction urea + 2 H2O + H(+) = hydrogencarbonate + 2 NH4(+). It participates in nitrogen metabolism; urea degradation; CO(2) and NH(3) from urea (urease route): step 1/1. The protein is Urease subunit beta of Halalkalibacterium halodurans (strain ATCC BAA-125 / DSM 18197 / FERM 7344 / JCM 9153 / C-125) (Bacillus halodurans).